The chain runs to 492 residues: Virion host shutoff protein (492 aa).

4 disordered regions span residues 110–130, 143–165, 288–307, and 334–369; these read EEAS…SRPS, FAPG…GAPS, SQAR…LESM, and EDDY…PPEL. Positions 144-165 are enriched in low complexity; that stretch reads APGDRGTRAAGPGPAAPSGAPS.

This sequence belongs to the herpesviridae VHS protein family. In terms of assembly, interacts with human EIF4H, EIF4A1 and EIF4A2; interaction with eIF4AI and EIF4A2 presumably allows Vhs protein to associate with the eIF4F cap-binding complex.

The protein resides in the virion. Its function is as follows. Minor structural protein that acts as an endoribonuclease during lytic infection. Degrades host mRNAs in the cytoplasm by cutting them at preferred sites, including some in regions of translation initiation. Together with inhibition of host splicing by ICP27, contributes to an overall decrease in host protein synthesis. Also, after the onset of viral transcription, accelerates the turnover of viral mRNA, thereby facilitating the sequential expression of different classes of viral genes. Binds translation initiation factors eIF4H, eIF4AI, and eIF4AII, thereby may interact directly with the translation initiation complex and thus digest specifically mRNAs. Also impedes antigen presentation by major histocompatibility complex class I and class II molecules, inhibits secretion of cytokines that would otherwise recruit lymphocytes and neutrophils cells to the site of infection and blocks the activation of dendritic cells. Impedes the alpha/beta interferon-mediated response to infection. Inhibits the integrated stress response (ISR) in the infected cell, this function requires the endonuclease activity. Stress granule formation is thus inhibited, which allows protein synthesis and viral replication. In Human herpesvirus 2 (strain G) (HHV-2), this protein is Virion host shutoff protein (UL41).